The sequence spans 285 residues: Seipin (285 aa).

The Cytoplasmic segment spans residues 1–16 (MKINVSRPLQFLQWSS). A helical transmembrane segment spans residues 17–37 (YIVVAFLIQLLIILPLSILIY). Residues 38-244 (HDFYLRLLPA…GLRNLMLRKR (207 aa)) are Lumenal-facing. Residues 245–265 (FLSYIIGISIFHCIICVLFFI) traverse the membrane as a helical segment. The Cytoplasmic portion of the chain corresponds to 266–285 (TGCTAFIFVRKGQEKSKKHS).

It belongs to the seipin family.

It localises to the endoplasmic reticulum membrane. In terms of biological role, involved in lipid metabolism and lipid droplet (LD) morphology, number, and size. Facilitates initiation of LD formation, and ensures that vectorial budding of LDs from the ER is directed towards the cytoplasm. The sequence is that of Seipin from Saccharomyces cerevisiae (strain ATCC 204508 / S288c) (Baker's yeast).